Here is a 455-residue protein sequence, read N- to C-terminus: Argininosuccinate synthase (455 aa).

ATP is bound by residues 17–25 (AFSGGLDTS) and alanine 43. Tyrosine 99 provides a ligand contact to L-citrulline. ATP-binding residues include glycine 129 and threonine 131. L-aspartate contacts are provided by threonine 131, asparagine 135, and aspartate 136. Residue asparagine 135 coordinates L-citrulline. Aspartate 136 lines the ATP pocket. Positions 139 and 192 each coordinate L-citrulline. Aspartate 194 lines the ATP pocket. 3 residues coordinate L-citrulline: threonine 201, glutamate 203, and glutamate 280. Residues 434 to 448 (TGLPQVDNNNLSSGR) are compositionally biased toward polar residues. Residues 434-455 (TGLPQVDNNNLSSGRGLQDKRQ) form a disordered region.

Belongs to the argininosuccinate synthase family. Type 2 subfamily. As to quaternary structure, homotetramer.

Its subcellular location is the cytoplasm. It catalyses the reaction L-citrulline + L-aspartate + ATP = 2-(N(omega)-L-arginino)succinate + AMP + diphosphate + H(+). It participates in amino-acid biosynthesis; L-arginine biosynthesis; L-arginine from L-ornithine and carbamoyl phosphate: step 2/3. In Yersinia pestis, this protein is Argininosuccinate synthase (argG).